The following is a 971-amino-acid chain: Piwi-like protein 2 (971 aa).

Arg45 is subject to Symmetric dimethylarginine. Arg74 bears the Omega-N-methylarginine; by PRMT5; alternate mark. Arg74 carries the post-translational modification Symmetric dimethylarginine; by PRMT5; alternate. Position 83 is an omega-N-methylarginine; alternate (Arg83). Residues Arg83 and Arg95 each carry the symmetric dimethylarginine; alternate modification. Arg95 carries the post-translational modification Omega-N-methylarginine; by PRMT5; alternate. Arg100 carries the symmetric dimethylarginine; by PRMT5; alternate modification. Arg100 bears the Omega-N-methylarginine; alternate mark. Positions 102–124 are disordered; sequence LSANMVRKDREEPRSSLPDPSVL. Symmetric dimethylarginine occurs at positions 144 and 156. The interval 159 to 200 is disordered; that stretch reads SSIGRGMDKPPSAFGLTARDPPRLPQPPALSPTSLHSADPPP. Arg163 carries the symmetric dimethylarginine; by PRMT5 modification. The PAZ domain maps to 387 to 500; that stretch reads SVLDVMHAIY…LLPELSFMTG (114 aa). A Symmetric dimethylarginine; by PRMT5 modification is found at Arg549. Positions 666–957 constitute a Piwi domain; sequence MVVCIIMGTR…LAFLSGQILH (292 aa). Residues Asp743, Glu781, Asp813, and His946 contribute to the active site.

This sequence belongs to the argonaute family. Piwi subfamily. Interacts with DDX4, MAEL, EIF3A, EIF4E, EIF4G, PRMT5 and WDR77. Associates with EIF4E- and EIF4G-containing m7G cap-binding complexes. Interacts (when methylated on arginine residues) with TDRD1 and TDRKH/TDRD2. Interacts with TDRD12. Component of the PET complex, at least composed of EXD1, PIWIL2, TDRD12 and piRNAs. Interacts with MOV10L1. Interacts with GPAT2. Interacts with Tex19.1 and, probably, Tex19.2. Interacts (via PIWI domain) with BMAL1 and CLOCK. Interacts with GSK3B. Interacts with TEX15. It depends on Mg(2+) as a cofactor. Arginine methylation by PRMT5 is required for the interaction with Tudor domain-containing protein TDRD1 and subsequent localization to the meiotic nuage, also named P granule. As to expression, expressed in adult testis, specifically in spermatocytes and in spermatogonia. Only detected in primordial germ cells of both sexes. Widely expressed in tumors. Also present at early stages of oocyte growth. Present in the mitotic spermatogonia. Not detected in the first stages of meiosis (preleptotene and leptotene). Detected at the late zygotene stage and increases throughout pachytene, declining from this stage onward until expression stops at the early round spermatid stage (at protein level).

The protein resides in the cytoplasm. Its function is as follows. Endoribonuclease that plays a central role during spermatogenesis by repressing transposable elements and preventing their mobilization, which is essential for the germline integrity. Plays an essential role in meiotic differentiation of spermatocytes, germ cell differentiation and in self-renewal of spermatogonial stem cells. Its presence in oocytes suggests that it may participate in similar functions during oogenesis in females. Acts via the piRNA metabolic process, which mediates the repression of transposable elements during meiosis by forming complexes composed of piRNAs and Piwi proteins and govern the methylation and subsequent repression of transposons. During piRNA biosynthesis, plays a key role in the piRNA amplification loop, also named ping-pong amplification cycle, by acting as a 'slicer-competent' piRNA endoribonuclease that cleaves primary piRNAs, which are then loaded onto 'slicer-incompetent' PIWIL4. PIWIL2 slicing produces a pre-miRNA intermediate, which is then processed in mature piRNAs, and as well as a 16 nucleotide by-product that is degraded. Required for PIWIL4/MIWI2 nuclear localization and association with secondary piRNAs antisense. Besides their function in transposable elements repression, piRNAs are probably involved in other processes during meiosis such as translation regulation. Indirectly modulates expression of genes such as PDGFRB, SLC2A1, ITGA6, GJA7, THY1, CD9 and STRA8. Represses circadian rhythms by promoting the stability and activity of core clock components BMAL1 and CLOCK by inhibiting GSK3B-mediated phosphorylation and ubiquitination-dependent degradation of these proteins. This is Piwi-like protein 2 from Mus musculus (Mouse).